The following is a 279-amino-acid chain: Prostatic spermine-binding protein (279 aa).

A signal peptide spans 1-17; it reads MLLLVTLALLAGPTCRA. Position 18 is a pyrrolidone carboxylic acid (glutamine 18). The region spanning 18-151 is the Jacalin-type lectin domain; sequence QNILGNNVGT…LNGMGFKWKN (134 aa). An N-linked (GlcNAc...) asparagine glycan is attached at asparagine 62. Acidic residues-rich tracts occupy residues 160–177 and 185–279; these read DDDK…NEED and NDHD…EEEE. A disordered region spans residues 160-279; the sequence is DDDKEDDDDE…DDDNGDEEEE (120 aa).

To mouse SBP. In terms of tissue distribution, prostate.

Its function is as follows. Spermine-binding protein is an androgen regulated ventral prostate glycoprotein that binds various polyamines. The polypeptide is Prostatic spermine-binding protein (Sbp) (Rattus norvegicus (Rat)).